Here is a 534-residue protein sequence, read N- to C-terminus: Glucans biosynthesis protein D (534 aa).

Residues 1-30 (MRMQRRHLLKNAAAALAALGLPALPQWALA) constitute a signal peptide (tat-type signal).

This sequence belongs to the OpgD/OpgG family. Predicted to be exported by the Tat system. The position of the signal peptide cleavage has not been experimentally proven.

The protein resides in the periplasm. It participates in glycan metabolism; osmoregulated periplasmic glucan (OPG) biosynthesis. Functionally, probably involved in the control of the structural glucose backbone of osmoregulated periplasmic glucans (OPGs). The chain is Glucans biosynthesis protein D from Xanthomonas oryzae pv. oryzae (strain KACC10331 / KXO85).